We begin with the raw amino-acid sequence, 288 residues long: Scolexin B (288 aa).

Residues methionine 1–alanine 20 form the signal peptide. The Peptidase S1 domain maps to alanine 21–asparagine 287. Positions isoleucine 27–lysine 56 are disordered. A disulfide bridge links cysteine 72 with cysteine 88. Residues histidine 87 and aspartate 145 each act as charge relay system in the active site. Cystine bridges form between cysteine 210–cysteine 223 and cysteine 235–cysteine 264. Serine 239 serves as the catalytic Charge relay system.

Belongs to the peptidase S1 family.

This chain is Scolexin B, found in Heliothis virescens (Tobacco budworm moth).